The following is a 62-amino-acid chain: Delta-theraphotoxin-Cg1a 3 (62 aa).

Residues 1–21 (MKTSILFVIFSLALVFALSPA) form the signal peptide. Positions 22 to 29 (TEIEETDR) are excised as a propeptide. Disulfide bonds link Cys31-Cys46, Cys38-Cys51, and Cys45-Cys58.

Belongs to the neurotoxin 10 (Hwtx-1) family. 33 (Jztx-1) subfamily. As to expression, expressed by the venom gland.

It is found in the secreted. Functionally, moderately inhibits voltage-gated sodium channels and weakly inhibits voltage-gated potassium channel. Inhibits the inactivation of rat Nav1.2/SCN2A (IC(50)=870 nM), rat Nav1.3/SCN3A (IC(50)=845 nM), rat Nav1.4/SCN4A (IC(50)=339 nM), human Nav1.5/SCN5A (IC(50)=335 nM) and human Nav1.7/SCN9A sodium channels (IC(50)=348 nM). The toxin delays the inactivation of sodium channels without affecting the activation and steady-state inactivation kinetics in the physiological range of voltages. Site-directed mutagenesis of the sodium channel indicates that the toxin interacts with site 3 located at the extracellular S3-S4 linker of domain IV. On potassium channels, it inhibits activation of channels with an IC(50) of 8.05 uM through a voltage sensor-trapping mechanism. It increases muscle contraction in several assays (mouse phrenic nerve-diaphragm, toad heart, rat vas deferens) and is suggested to act both presynaptically and postsynaptically. The protein is Delta-theraphotoxin-Cg1a 3 of Chilobrachys guangxiensis (Chinese earth tiger tarantula).